Here is a 499-residue protein sequence, read N- to C-terminus: GTPase Der (499 aa).

Residues 3-166 (PVIALVGRPN…QALGIFPKDN (164 aa)) enclose the EngA-type G 1 domain. Residues 9 to 16 (GRPNVGKS), 56 to 60 (DTGGI), and 118 to 121 (NKVD) contribute to the GTP site. A disordered region spans residues 166-199 (NADENAEGEEGGELAEGEEVVAEGQEPKRIPGPS). Acidic residues predominate over residues 168–186 (DENAEGEEGGELAEGEEVV). Basic and acidic residues predominate over residues 190-199 (QEPKRIPGPS). The EngA-type G 2 domain maps to 204-377 (IKIAIIGRPN…SVQAAFKSAI (174 aa)). Residues 210–217 (GRPNVGKS), 257–261 (DTAGV), and 322–325 (NKWD) contribute to the GTP site. In terms of domain architecture, KH-like spans 378-462 (TRWPTSRLTQ…PIRIEYKGGD (85 aa)). A compositionally biased stretch (basic and acidic residues) spans 459–472 (KGGDNPYEGKKNTL). The disordered stretch occupies residues 459–499 (KGGDNPYEGKKNTLTDRQVNKKRRLMSHHKKAEKKRRDKKR). Residues 478 to 499 (NKKRRLMSHHKKAEKKRRDKKR) show a composition bias toward basic residues.

The protein belongs to the TRAFAC class TrmE-Era-EngA-EngB-Septin-like GTPase superfamily. EngA (Der) GTPase family. In terms of assembly, associates with the 50S ribosomal subunit.

Functionally, GTPase that plays an essential role in the late steps of ribosome biogenesis. The chain is GTPase Der from Stutzerimonas stutzeri (strain A1501) (Pseudomonas stutzeri).